The primary structure comprises 215 residues: Adenylate kinase (215 aa).

An ATP-binding site is contributed by 10 to 15 (GAGKGT). An NMP region spans residues 30-59 (STGDMFRAAMKNETEMGKLAKSFIDKGELV). AMP-binding positions include T31, R36, 57–59 (ELV), 86–89 (GYPR), and Q93. The interval 127–165 (GRYICRNCGATYHKIFNPTKVEGVCDVCGSHDLYQRADD) is LID. R128 contributes to the ATP binding site. Zn(2+) is bound by residues C131 and C134. Residue 137 to 138 (TY) participates in ATP binding. C151 and C154 together coordinate Zn(2+). Residues R162 and R173 each coordinate AMP. Q201 lines the ATP pocket.

This sequence belongs to the adenylate kinase family. As to quaternary structure, monomer.

The protein localises to the cytoplasm. The catalysed reaction is AMP + ATP = 2 ADP. Its pathway is purine metabolism; AMP biosynthesis via salvage pathway; AMP from ADP: step 1/1. Catalyzes the reversible transfer of the terminal phosphate group between ATP and AMP. Plays an important role in cellular energy homeostasis and in adenine nucleotide metabolism. The protein is Adenylate kinase of Lactococcus lactis subsp. lactis (strain IL1403) (Streptococcus lactis).